Here is a 470-residue protein sequence, read N- to C-terminus: Neuraminidase (470 aa).

The Intravirion portion of the chain corresponds to methionine 1–lysine 6. Residues isoleucine 7–glycine 27 traverse the membrane as a helical segment. Positions glycine 11 to tryptophan 33 are involved in apical transport and lipid raft association. At asparagine 28–lysine 470 the chain is on the virion surface side. Residues histidine 36–serine 90 are hypervariable stalk region. N-linked (GlcNAc...) asparagine; by host glycans are attached at residues asparagine 44, asparagine 58, asparagine 63, asparagine 70, and asparagine 88. A head of neuraminidase region spans residues leucine 91–lysine 470. Disulfide bonds link cysteine 92/cysteine 417, cysteine 124/cysteine 129, cysteine 184/cysteine 231, cysteine 233/cysteine 238, cysteine 279/cysteine 292, cysteine 281/cysteine 290, cysteine 318/cysteine 335, and cysteine 421/cysteine 447. Position 118 (arginine 118) interacts with substrate. Asparagine 146 is a glycosylation site (N-linked (GlcNAc...) asparagine; by host). Aspartate 151 (proton donor/acceptor) is an active-site residue. Arginine 152 contributes to the substrate binding site. Asparagine 235 carries an N-linked (GlcNAc...) asparagine; by host glycan. Glutamate 277–glutamate 278 is a substrate binding site. Residue arginine 293 participates in substrate binding. Residues aspartate 294, glycine 298, and aspartate 324 each contribute to the Ca(2+) site. Asparagine 365 is a glycosylation site (N-linked (GlcNAc...) asparagine; by host). Arginine 368 provides a ligand contact to substrate. Tyrosine 402 functions as the Nucleophile in the catalytic mechanism. Asparagine 455 carries an N-linked (GlcNAc...) asparagine; by host glycan.

This sequence belongs to the glycosyl hydrolase 34 family. As to quaternary structure, homotetramer. It depends on Ca(2+) as a cofactor. Post-translationally, N-glycosylated.

The protein localises to the virion membrane. Its subcellular location is the host apical cell membrane. The catalysed reaction is Hydrolysis of alpha-(2-&gt;3)-, alpha-(2-&gt;6)-, alpha-(2-&gt;8)- glycosidic linkages of terminal sialic acid residues in oligosaccharides, glycoproteins, glycolipids, colominic acid and synthetic substrates.. Its activity is regulated as follows. Inhibited by the neuraminidase inhibitors zanamivir (Relenza) and oseltamivir (Tamiflu). These drugs interfere with the release of progeny virus from infected cells and are effective against all influenza strains. Resistance to neuraminidase inhibitors is quite rare. Functionally, catalyzes the removal of terminal sialic acid residues from viral and cellular glycoconjugates. Cleaves off the terminal sialic acids on the glycosylated HA during virus budding to facilitate virus release. Additionally helps virus spread through the circulation by further removing sialic acids from the cell surface. These cleavages prevent self-aggregation and ensure the efficient spread of the progeny virus from cell to cell. Otherwise, infection would be limited to one round of replication. Described as a receptor-destroying enzyme because it cleaves a terminal sialic acid from the cellular receptors. May facilitate viral invasion of the upper airways by cleaving the sialic acid moieties on the mucin of the airway epithelial cells. Likely to plays a role in the budding process through its association with lipid rafts during intracellular transport. May additionally display a raft-association independent effect on budding. Plays a role in the determination of host range restriction on replication and virulence. Sialidase activity in late endosome/lysosome traffic seems to enhance virus replication. In Aves (Human), this protein is Neuraminidase.